A 731-amino-acid polypeptide reads, in one-letter code: Putative beta-galactosidase (731 aa).

Residues 1 to 29 (MLCGKENNVMKMMLVYVFVLITLISCVYG) form the signal peptide. Residue E187 is the Proton donor of the active site. The Nucleophile role is filled by E257.

The protein belongs to the glycosyl hydrolase 35 family. Senescing flower petals.

It carries out the reaction Hydrolysis of terminal non-reducing beta-D-galactose residues in beta-D-galactosides.. This Dianthus caryophyllus (Carnation) protein is Putative beta-galactosidase (CARSR12).